The primary structure comprises 86 residues: uncharacterized protein (86 aa).

This sequence to C.jejuni CJ0253.

This is an uncharacterized protein from Helicobacter pylori (strain J99 / ATCC 700824) (Campylobacter pylori J99).